The sequence spans 788 residues: Integrin beta-3 (788 aa).

The first 26 residues, Met-1–Gly-26, serve as a signal peptide directing secretion. Residues Gly-27–Asp-718 are Extracellular-facing. The PSI domain occupies Ile-30–Ala-76. 19 cysteine pairs are disulfide-bonded: Cys-31–Cys-49, Cys-39–Cys-461, Cys-42–Cys-64, Cys-52–Cys-75, Cys-203–Cys-210, Cys-258–Cys-299, Cys-400–Cys-412, Cys-432–Cys-459, Cys-463–Cys-483, Cys-474–Cys-486, Cys-488–Cys-497, Cys-499–Cys-529, Cys-512–Cys-527, Cys-521–Cys-532, Cys-534–Cys-547, Cys-549–Cys-570, Cys-554–Cys-568, Cys-562–Cys-573, and Cys-575–Cys-584. Asn-125 carries N-linked (GlcNAc...) asparagine glycosylation. The 243-residue stretch at Asp-135–Ile-377 folds into the VWFA domain. 2 residues coordinate Mg(2+): Ser-147 and Ser-149. Ca(2+) is bound by residues Ser-149, Asp-152, Asp-153, and Asp-184. Positions Cys-203 to Cys-210 are involved in CX3CL1-, NRG1-, FGF1- and IGF1-binding. 5 residues coordinate Ca(2+): Asn-241, Asp-243, Pro-245, Glu-246, and Asp-277. Glu-246 provides a ligand contact to Mg(2+). The CX3CL1-binding stretch occupies residues Gln-293–Met-313. The N-linked (GlcNAc...) asparagine glycan is linked to Asn-346. Residue Met-361 participates in Ca(2+) binding. An N-linked (GlcNAc...) asparagine glycan is attached at Asn-397. I-EGF domains follow at residues Cys-463–Glu-498, Cys-499–Glu-548, Cys-549–Asn-585, and Cys-586–Glu-625. Asn-478 carries N-linked (GlcNAc...) asparagine glycosylation. Asn-585 carries N-linked (GlcNAc...) asparagine glycosylation. Cystine bridges form between Cys-586–Cys-609, Cys-593–Cys-607, Cys-601–Cys-612, Cys-614–Cys-624, Cys-627–Cys-630, Cys-634–Cys-681, Cys-640–Cys-661, Cys-643–Cys-657, and Cys-689–Cys-713. Asn-680 carries an N-linked (GlcNAc...) asparagine glycan. Residues Ile-719–Trp-741 traverse the membrane as a helical segment. Residues Lys-742–Thr-788 lie on the Cytoplasmic side of the membrane. Phosphothreonine is present on Thr-767. At Tyr-773 the chain carries Phosphotyrosine. Residues Thr-777–Ile-783 carry the LIR motif. A Phosphothreonine; by PDPK1 and PKB/AKT1; in vitro modification is found at Thr-779. Tyr-785 carries the post-translational modification Phosphotyrosine.

Belongs to the integrin beta chain family. In terms of assembly, heterodimer of an alpha and a beta subunit. Beta-3 (ITGB3) associates with either alpha-IIb (ITGA2B) or alpha-V (ITGAV). Isoform Beta-3C interacts with FLNB. Interacts with COMP. Interacts with PDIA6 following platelet stimulation. Interacts with SYK; upon activation by ITGB3 promotes platelet adhesion. Interacts with MYO10. Interacts with DAB2. Interacts with FERMT2. Interacts with EMP2; regulates the levels of the heterodimer ITGA5:ITGB3 integrin expression on the plasma membrane. Integrin ITGAV:ITGB3 interacts with FBLN5 (via N-terminus). ITGAV:ITGB3 interacts with CCN3. ITGAV:ITGB3 and ITGA2B:ITGB3 interact with SELP (via C-type lectin domain); the interaction mediates cell-cell interaction and adhesion. ITGAV:ITGB3 is found in a ternary complex with CX3CR1 and CX3CL1. ITGAV:ITGB3 is found in a ternary complex with NRG1 and ERBB3. ITGAV:ITGB3 is found in a ternary complex with FGF1 and FGFR1. ITGAV:ITGB3 interacts with FGF2; it is likely that FGF2 can simultaneously bind ITGAV:ITGB3 and FGF receptors. ITGAV:ITGB3 binds to IL1B. ITGAV:ITGB3 is found in a ternary complex with IGF1 and IGF1R. ITGAV:ITGB3 interacts with IGF2. ITGAV:ITGB3 interacts with FBN1. ITGAV:ITGB3 interacts with CD9, CD81 and CD151 (via second extracellular domain). Interacts (via the allosteric site (site 2)) with CXCL12 in a CXCR4-independent manner. Interacts with MXRA8/DICAM; the interaction inhibits ITGAV:ITGB3 heterodimer formation. ITGAV:ITGB3 interacts with PTN. Forms a complex with PTPRZ1 and PTN that stimulates endothelial cell migration through ITGB3 Tyr-773 phosphorylation. ITGAV:ITGB3 interacts with SLC6A4. Interacts with SLC6A4 (via C-terminus); this interaction regulates SLC6A4 trafficking. ITGA2B:ITGB3 interacts with PPIA/CYPA; the interaction is ROS and PPIase activity-dependent and is increased in the presence of thrombin. Interacts with tensin TNS3; TNS3 also interacts with PEAK1, thus acting as an adapter molecule to bridge the association of PEAK1 with ITGB3. Interacts with TM4SF19. As to quaternary structure, (Microbial infection) Integrin ITGAV:ITGB3 interacts with herpes virus 8/HHV-8 glycoprotein B. (Microbial infection) Integrin ITGAV:ITGB3 interacts with coxsackievirus A9 capsid proteins. In terms of assembly, (Microbial infection) Interacts with Hantaan virus glycoprotein G. As to quaternary structure, (Microbial infection) Integrin ITGAV:ITGB3 interacts with cytomegalovirus/HHV-5 gH:gL proteins. (Microbial infection) Integrin ITGA5:ITGB3 interacts with human metapneumovirus fusion protein. In terms of assembly, (Microbial infection) Integrin ITGAV:ITGB3 interacts with human parechovirus 1 capsid proteins. As to quaternary structure, (Microbial infection) Integrin ITGAV:ITGB3 interacts with west nile virus envelope protein E. (Microbial infection) Interacts with HIV-1 Tat. ITGAV:ITGB3 interacts with AGRA2. In terms of processing, phosphorylated on tyrosine residues in response to thrombin-induced platelet aggregation. Probably involved in outside-in signaling. A peptide (AA 740-762) is capable of binding GRB2 only when both Tyr-773 and Tyr-785 are phosphorylated. Phosphorylation of Thr-779 inhibits SHC binding. Isoform beta-3A and isoform beta-3C are widely expressed. Isoform beta-3A is specifically expressed in osteoblast cells; isoform beta-3C is specifically expressed in prostate and testis.

It localises to the cell membrane. Its subcellular location is the cell projection. The protein resides in the lamellipodium membrane. The protein localises to the cell junction. It is found in the focal adhesion. It localises to the postsynaptic cell membrane. Its subcellular location is the synapse. Its function is as follows. Integrin alpha-V/beta-3 (ITGAV:ITGB3) is a receptor for cytotactin, fibronectin, laminin, matrix metalloproteinase-2, osteopontin, osteomodulin, prothrombin, thrombospondin, vitronectin and von Willebrand factor. Integrin alpha-IIb/beta-3 (ITGA2B:ITGB3) is a receptor for fibronectin, fibrinogen, plasminogen, prothrombin, thrombospondin and vitronectin. Integrins alpha-IIb/beta-3 and alpha-V/beta-3 recognize the sequence R-G-D in a wide array of ligands. Integrin alpha-IIb/beta-3 recognizes the sequence H-H-L-G-G-G-A-K-Q-A-G-D-V in fibrinogen gamma chain. Following activation integrin alpha-IIb/beta-3 brings about platelet/platelet interaction through binding of soluble fibrinogen. This step leads to rapid platelet aggregation which physically plugs ruptured endothelial surface. Fibrinogen binding enhances SELP expression in activated platelets. ITGAV:ITGB3 binds to fractalkine (CX3CL1) and acts as its coreceptor in CX3CR1-dependent fractalkine signaling. ITGAV:ITGB3 binds to NRG1 (via EGF domain) and this binding is essential for NRG1-ERBB signaling. ITGAV:ITGB3 binds to FGF1 and this binding is essential for FGF1 signaling. ITGAV:ITGB3 binds to FGF2 and this binding is essential for FGF2 signaling. ITGAV:ITGB3 binds to IGF1 and this binding is essential for IGF1 signaling. ITGAV:ITGB3 binds to IGF2 and this binding is essential for IGF2 signaling. ITGAV:ITGB3 binds to IL1B and this binding is essential for IL1B signaling. ITGAV:ITGB3 binds to PLA2G2A via a site (site 2) which is distinct from the classical ligand-binding site (site 1) and this induces integrin conformational changes and enhanced ligand binding to site 1. ITGAV:ITGB3 acts as a receptor for fibrillin-1 (FBN1) and mediates R-G-D-dependent cell adhesion to FBN1. In brain, plays a role in synaptic transmission and plasticity. Involved in the regulation of the serotonin neurotransmission, is required to localize to specific compartments within the synapse the serotonin receptor SLC6A4 and for an appropriate reuptake of serotonin. Controls excitatory synaptic strength by regulating GRIA2-containing AMPAR endocytosis, which affects AMPAR abundance and composition. ITGAV:ITGB3 act as a receptor for CD40LG. ITGAV:ITGB3 acts as a receptor for IBSP and promotes cell adhesion and migration to IBSP. Functionally, (Microbial infection) Integrin ITGAV:ITGB3 acts as a receptor for Herpes virus 8/HHV-8. (Microbial infection) Integrin ITGAV:ITGB3 acts as a receptor for Coxsackievirus A9. In terms of biological role, (Microbial infection) Acts as a receptor for Hantaan virus. Its function is as follows. (Microbial infection) Integrin ITGAV:ITGB3 acts as a receptor for Cytomegalovirus/HHV-5. Functionally, (Microbial infection) Integrin ITGA5:ITGB3 acts as a receptor for Human metapneumovirus. (Microbial infection) Integrin ITGAV:ITGB3 acts aP05556s a receptor for Human parechovirus 1. In terms of biological role, (Microbial infection) Integrin ITGAV:ITGB3 acts as a receptor for West nile virus. Its function is as follows. (Microbial infection) In case of HIV-1 infection, the interaction with extracellular viral Tat protein seems to enhance angiogenesis in Kaposi's sarcoma lesions. The polypeptide is Integrin beta-3 (Homo sapiens (Human)).